Here is a 385-residue protein sequence, read N- to C-terminus: MSWQQRIEAALVQRQHDDAYRVRQSNQGGSGRWLIQGDRCYLNFSSNDYLGLSHHPEIVRAWQQGAEQYGIGSGGSGHVTGYTDAHASLENQLADWLGYPRALLFISGYAANQAVVAALAQAEDRIFADKLSHASLLEAAAQSPATLRRFKHNQADSLQALLEKPTDGQTLVVTEGVFSMDGDTAPLPALQAQCRAHDAWLMVDDAHGIGVLGDEGRGSCWQQDIKPELLIVTFGKAFGVSGAAVLCTEPLAEYFLQFARHLIYSTSMPAAQACALSAAVNCVRQGGARRDALRRNIALFRAGFSNSSYQLMNSQSAIQPLIVGENARALALMNHLREQGVWVSAMRPPTVPPGSARLRITLTAEHQPEDINRLLTVLHHADRKL.

Substrate is bound at residue Arg21. Pyridoxal 5'-phosphate is bound at residue Gly108 to Tyr109. Residue His133 coordinates substrate. Positions 179, 207, and 233 each coordinate pyridoxal 5'-phosphate. Position 236 is an N6-(pyridoxal phosphate)lysine (Lys236). Thr350 is a binding site for substrate.

The protein belongs to the class-II pyridoxal-phosphate-dependent aminotransferase family. BioF subfamily. In terms of assembly, homodimer. The cofactor is pyridoxal 5'-phosphate.

It catalyses the reaction 6-carboxyhexanoyl-[ACP] + L-alanine + H(+) = (8S)-8-amino-7-oxononanoate + holo-[ACP] + CO2. It functions in the pathway cofactor biosynthesis; biotin biosynthesis. Functionally, catalyzes the decarboxylative condensation of pimeloyl-[acyl-carrier protein] and L-alanine to produce 8-amino-7-oxononanoate (AON), [acyl-carrier protein], and carbon dioxide. The protein is 8-amino-7-oxononanoate synthase of Pectobacterium atrosepticum (strain SCRI 1043 / ATCC BAA-672) (Erwinia carotovora subsp. atroseptica).